The chain runs to 334 residues: MTTVYYDQDVKTDALQGKKIAVVGYGSQGHAHAQNLKDNGYDVVIGIRPGRSFDKAKEDGFDVFPVAEAVKQADVIMVLLPDEIQGDVYKNEIEPNLEKHNALAFAHGFNIHFGVIQPPADVDVFLVAPKGPGHLVRRTFVEGSAVPSLFGIQQDASGQARNIALSYAKGIGATRAGVIETTFKEETETDLFGEQAVLCGGVSKLIQSGFETLVEAGYQPELAYFEVLHEMKLIVDLMYEGGTENVRYSISNTAEFGDYVSGPRVITPDVKENMKAVLTDIQNGNFSNRFIEDNKNGFKEFYKLREEQHGHQIEKVGRELREMMPFIKSKSIEK.

The region spanning 1–181 (MTTVYYDQDV…GATRAGVIET (181 aa)) is the KARI N-terminal Rossmann domain. Residues 25–28 (YGSQ), arginine 48, serine 52, and 82–85 (DEIQ) each bind NADP(+). Histidine 107 is an active-site residue. NADP(+) is bound at residue glycine 133. Residues 182–327 (TFKEETETDL…RELREMMPFI (146 aa)) enclose the KARI C-terminal knotted domain. Positions 190, 194, 226, and 230 each coordinate Mg(2+). Serine 251 contributes to the substrate binding site.

This sequence belongs to the ketol-acid reductoisomerase family. It depends on Mg(2+) as a cofactor.

The enzyme catalyses (2R)-2,3-dihydroxy-3-methylbutanoate + NADP(+) = (2S)-2-acetolactate + NADPH + H(+). It carries out the reaction (2R,3R)-2,3-dihydroxy-3-methylpentanoate + NADP(+) = (S)-2-ethyl-2-hydroxy-3-oxobutanoate + NADPH + H(+). It functions in the pathway amino-acid biosynthesis; L-isoleucine biosynthesis; L-isoleucine from 2-oxobutanoate: step 2/4. The protein operates within amino-acid biosynthesis; L-valine biosynthesis; L-valine from pyruvate: step 2/4. In terms of biological role, involved in the biosynthesis of branched-chain amino acids (BCAA). Catalyzes an alkyl-migration followed by a ketol-acid reduction of (S)-2-acetolactate (S2AL) to yield (R)-2,3-dihydroxy-isovalerate. In the isomerase reaction, S2AL is rearranged via a Mg-dependent methyl migration to produce 3-hydroxy-3-methyl-2-ketobutyrate (HMKB). In the reductase reaction, this 2-ketoacid undergoes a metal-dependent reduction by NADPH to yield (R)-2,3-dihydroxy-isovalerate. This chain is Ketol-acid reductoisomerase (NADP(+)), found in Staphylococcus aureus (strain MSSA476).